A 621-amino-acid polypeptide reads, in one-letter code: Signal recognition particle receptor subunit alpha homolog (621 aa).

The tract at residues 1-158 (MFDQLAVFTP…KKFEQYFRIK (158 aa)) is SRX. Positions 167-217 (HINPDNFTKNGSVPQSHNKNTKKKLRDTKGKKQSTGNVGSGRKWGRDGGML) are disordered. The span at 171–183 (DNFTKNGSVPQSH) shows a compositional bias: polar residues. Over residues 185-198 (KNTKKKLRDTKGKK) the composition is skewed to basic residues. Ser239 is subject to Phosphoserine. The NG domain stretch occupies residues 398–620 (YVFSIVGVNG…SVKWAVNTLM (223 aa)). Residues 404 to 411 (GVNGVGKS) and 510 to 514 (DTAGR) contribute to the GTP site. A Phosphoserine modification is found at Ser523. Position 572–575 (572–575 (SKCD)) interacts with GTP.

The protein belongs to the GTP-binding SRP family. Heterodimer of an alpha and a beta chain.

It is found in the endoplasmic reticulum membrane. Its function is as follows. Component of the SRP (signal recognition particle) receptor (SR). Ensures, in conjunction with the signal recognition particle, the correct targeting of the nascent secretory proteins to the endoplasmic reticulum membrane system. GTP hydrolysis may enhance the fidelity of and provide unidirectionality to the targeting reaction. It is important but not essential for cell growth. May be directly involved in mitochondrial protein import. The sequence is that of Signal recognition particle receptor subunit alpha homolog (SRP101) from Saccharomyces cerevisiae (strain ATCC 204508 / S288c) (Baker's yeast).